The following is a 1043-amino-acid chain: BAG family molecular chaperone regulator 6 (1043 aa).

5 disordered regions span residues 253 to 294 (KEEL…GKTV), 311 to 331 (DVKEAQNQKNKEEPGQVPYPI), 343 to 366 (VEASESKESSNEGRNLESCPSDLH), 410 to 500 (NIPV…AESR), and 533 to 566 (SVESNSNLQEESNGEIIKPCEAKENREQPAKKSF). 4 stretches are compositionally biased toward basic and acidic residues: residues 311 to 324 (DVKEAQNQKNKEEP), 343 to 357 (VEASESKESSNEGRN), 416 to 443 (SENHLPKPTEPTKRIAKNEPVKSTKKEQ), and 478 to 487 (KRMEKSKETK). Over residues 534 to 543 (VESNSNLQEE) the composition is skewed to polar residues. Basic and acidic residues predominate over residues 550–566 (KPCEAKENREQPAKKSF). One can recognise an IQ domain in the interval 568–597 (EEEAARIIQSMYRGYDVRRWEPIKKLKEIA). A BAG domain is found at 595 to 672 (EIATVREQMG…SIQDKLDSLK (78 aa)). Residues 724–741 (SPEEHPMSVLNRTDEKQA) show a composition bias toward basic and acidic residues. Disordered regions lie at residues 724 to 749 (SPEEHPMSVLNRTDEKQAESAAETEE), 764 to 799 (ATENAAAASSTTIPEKIGEVETVVPGNPPSADGNGM), 817 to 975 (EPIN…ISKE), and 1015 to 1043 (EKKLSHKKKTQIRRRASKPMSVSPTDAVL). Residues 840–852 (ASEVSEAETNSSE) are compositionally biased toward low complexity. The span at 853–871 (NENRKGEDDIVLHSEKNVE) shows a compositional bias: basic and acidic residues. 2 stretches are compositionally biased toward polar residues: residues 885–899 (QPLSQDPSSSYTREG) and 919–932 (SPNNSKGIGQQTSE). Basic and acidic residues predominate over residues 934 to 951 (QDEKEQSPETEVIVKEQP). Residues 971-1024 (GISKETKKLMEENQRFKETMETLVKAGREQLEVISKLTSRVKSLEKKLSHKKKT) are a coiled coil. Basic residues predominate over residues 1018-1031 (LSHKKKTQIRRRAS). Over residues 1034 to 1043 (MSVSPTDAVL) the composition is skewed to polar residues.

In terms of assembly, binds to the ATPase domain of HSP70/HSC70 chaperones. Interacts with calmodulins CAM1, CAM2, CAM3, CAM4, CAM6 and CAM7. Interacts with BAGP1 and APCB1. As to expression, detected in stems, leaves, flowers and roots.

Co-chaperone that regulates diverse cellular pathways, such as programmed cell death and stress responses. Involved in plant basal resistance. Involved in basal heat response through the regulation of the heat induced small HSP (sHSP) transcriptional cascade. Its function is as follows. Induces autophagy. In Arabidopsis thaliana (Mouse-ear cress), this protein is BAG family molecular chaperone regulator 6.